Consider the following 162-residue polypeptide: Anthrone oxygenase nsrD (162 aa).

The next 3 membrane-spanning stretches (helical) occupy residues 17 to 37 (FLSG…LDTI), 54 to 74 (GSIY…YVAL), and 86 to 106 (PYVL…WVMV). N-linked (GlcNAc...) asparagine glycosylation is present at N109. Residues 130-150 (LVVKWAWLHVVRSLYPLFGAF) traverse the membrane as a helical segment.

It belongs to the anthrone oxygenase family.

It localises to the membrane. It catalyses the reaction emodin anthrone + O2 = emodin + H2O + H(+). It participates in secondary metabolite biosynthesis. Anthrone oxygenase; part of the gene cluster that mediates the biosynthesis of the tetrahydroxanthone dimer neosartorin, which exhibits antibacterial activity. The two different monomeric units appear to be synthesized by the same set of enzymes, among which the Baeyer-Villiger monooxygenase nsrF is the key enzyme for the divergence of the biosynthetic routes. The pathway begins with the synthesis of atrochrysone thioester by the polyketide synthase nsrB. The atrochrysone carboxyl ACP thioesterase nsrC then breaks the thioester bond and releases the atrochrysone carboxylic acid from AacuL. Atrochrysone carboxylic acid is decarboxylated by the decarboxylase nsrE, and oxidized by the anthrone oxygenase nsrD to yield emodin. Emodin is then reduced to emodin hydroquinone by the oxidoreductase nsrR. A-ring reduction by the short chain dehydrogenase nsrJ, dehydration by the scytalone dehydratase-like protein nsrI and probable spontaneous re-oxidation, results in overall deoxygenation to chrysophanol. The Baeyer-Villiger monooxygenase nsrF accepts chrysophanol as a substrate to insert one oxygen atom at two different positions to yield the precursors of both monomric units. NsrF is promiscuous/flexible in interacting with the 2 (non methylated and methylated) aromatic rings of chrysophanol, thus diverging the biosynthetic pathway at this point. After the hydrolysis of the lactones, methylesterification by the methyltransferase nsrG yields respectively moniliphenone and 2,2',6'-trihydroxy-4-methyl-6-methoxya-cyldiphenylmethanone. The next steps are the hydroxylation by the FAD-dependent monooxygenase nsrK, followed by isomerization by the monooxygenase nsrQ. The short chain dehydrogenase/reductase nsrO then catalyzes the C-5 ketoreduction to give the xanthone skeleton of blennolide C and 5-acetylblennolide A. The acetyltransferase nsrL has a strict substrate specificity and uses only blennolide A but not blennolide C to yield 5-acetylblennolide A as the single-acetylated product. In the final step of the biosynthesis, the heterodimerization of the 2 xanthones, blennolide C and 5-acetylblennolide A, is catalyzed by the cytochrome P450 monooxygenase nsrP. NsrP can utilize at least three different xanthones as its substrates to perform the dimerization reaction. This chain is Anthrone oxygenase nsrD, found in Aspergillus novofumigatus (strain IBT 16806).